The following is a 348-amino-acid chain: Dihydroorotase (348 aa).

Zn(2+)-binding residues include H17 and H19. Residues 19–21 and N45 each bind substrate; that span reads HLR. Zn(2+) is bound by residues K103, H140, and H178. Residue K103 is modified to N6-carboxylysine. Residue H140 coordinates substrate. L223 contacts substrate. D251 serves as a coordination point for Zn(2+). Residue D251 is part of the active site. 2 residues coordinate substrate: H255 and A267.

The protein belongs to the metallo-dependent hydrolases superfamily. DHOase family. Class II DHOase subfamily. Homodimer. Zn(2+) is required as a cofactor.

It carries out the reaction (S)-dihydroorotate + H2O = N-carbamoyl-L-aspartate + H(+). It functions in the pathway pyrimidine metabolism; UMP biosynthesis via de novo pathway; (S)-dihydroorotate from bicarbonate: step 3/3. Functionally, catalyzes the reversible cyclization of carbamoyl aspartate to dihydroorotate. This is Dihydroorotase from Salmonella agona (strain SL483).